Consider the following 503-residue polypeptide: ATP synthase subunit alpha (503 aa).

Residue 169 to 176 participates in ATP binding; that stretch reads GDRKTGKT.

This sequence belongs to the ATPase alpha/beta chains family. In terms of assembly, F-type ATPases have 2 components, CF(1) - the catalytic core - and CF(0) - the membrane proton channel. CF(1) has five subunits: alpha(3), beta(3), gamma(1), delta(1), epsilon(1). CF(0) has three main subunits: a(1), b(2) and c(9-12). The alpha and beta chains form an alternating ring which encloses part of the gamma chain. CF(1) is attached to CF(0) by a central stalk formed by the gamma and epsilon chains, while a peripheral stalk is formed by the delta and b chains.

It localises to the cell membrane. The enzyme catalyses ATP + H2O + 4 H(+)(in) = ADP + phosphate + 5 H(+)(out). With respect to regulation, increases 2-fold following exposure to low pH. In terms of biological role, produces ATP from ADP in the presence of a proton gradient across the membrane. The alpha chain is a regulatory subunit. This Lactobacillus acidophilus (strain ATCC 700396 / NCK56 / N2 / NCFM) protein is ATP synthase subunit alpha.